We begin with the raw amino-acid sequence, 494 residues long: MANYFNTLNLRQQLDQLGRCRFMDRNEFATEADYLKGKKVVIVGCGAQGLNQGLNMRDSGLDVSYALRQAAIDEQRQSYKNAKENGFDVGSYEQLIPIADLVVNLTPDKQHSNVVETVMPLMKEGAALGYSHGFNIVEEGMQIRKDITVVMVAPKCPGTEVREEYKRGFGVPTLIAVHPENDPKGDGQEIAKAWAAATGGHRAGVLESSFVAEVKSDLMGEQTILCGMLQAGSIVCYEKMIADGIDAGYAGKLLQYGWETITEALKFGGITHMMDRLSNPAKVKAFELSEELKDLMRPLYNKHMDNIITGHFSSTMMADWANDDVNLLGWREETGETAFENYPVTDVEIPEQEYFDNGILMVAMVRAGVELAFEAMTASGIVEESAYYESLHELPLIANTVARKRLYEMNVVISDTAEYGNYLFANVATPLLREKFMTDVDTDVIGRGLGEVSNQVSNETLIVVNETLRSHPVELVGQELRGYMTDMKRIAVGD.

Residues 14 to 208 (LDQLGRCRFM…GGHRAGVLES (195 aa)) enclose the KARI N-terminal Rossmann domain. Residues 45 to 48 (CGAQ), R68, R76, S78, and 108 to 110 (DKQ) each bind NADP(+). The active site involves H132. G158 lines the NADP(+) pocket. KARI C-terminal knotted domains follow at residues 209 to 344 (SFVA…NYPV) and 345 to 487 (TDVE…MTDM). Mg(2+) is bound by residues D217, E221, E389, and E393. Residue S414 participates in substrate binding.

It belongs to the ketol-acid reductoisomerase family. Requires Mg(2+) as cofactor.

The catalysed reaction is (2R)-2,3-dihydroxy-3-methylbutanoate + NADP(+) = (2S)-2-acetolactate + NADPH + H(+). It catalyses the reaction (2R,3R)-2,3-dihydroxy-3-methylpentanoate + NADP(+) = (S)-2-ethyl-2-hydroxy-3-oxobutanoate + NADPH + H(+). It functions in the pathway amino-acid biosynthesis; L-isoleucine biosynthesis; L-isoleucine from 2-oxobutanoate: step 2/4. Its pathway is amino-acid biosynthesis; L-valine biosynthesis; L-valine from pyruvate: step 2/4. Its function is as follows. Involved in the biosynthesis of branched-chain amino acids (BCAA). Catalyzes an alkyl-migration followed by a ketol-acid reduction of (S)-2-acetolactate (S2AL) to yield (R)-2,3-dihydroxy-isovalerate. In the isomerase reaction, S2AL is rearranged via a Mg-dependent methyl migration to produce 3-hydroxy-3-methyl-2-ketobutyrate (HMKB). In the reductase reaction, this 2-ketoacid undergoes a metal-dependent reduction by NADPH to yield (R)-2,3-dihydroxy-isovalerate. This chain is Ketol-acid reductoisomerase (NADP(+)), found in Photobacterium profundum (strain SS9).